The chain runs to 279 residues: Movement protein (279 aa).

The protein belongs to the cucumovirus movement protein family.

It is found in the host cell junction. It localises to the host plasmodesma. Its function is as follows. Transports viral genome to neighboring plant cells directly through plasmosdesmata, without any budding. The movement protein allows efficient cell to cell propagation, by bypassing the host cell wall barrier. Acts by forming a tubular structure at the host plasmodesmata, enlarging it enough to allow free passage of virion capsids. The polypeptide is Movement protein (Cucumis sativus (Cucumber)).